The chain runs to 216 residues: Octanoyltransferase (216 aa).

In terms of domain architecture, BPL/LPL catalytic spans 31 to 205; sequence STTRDEVWLV…ELVTLLDYEQ (175 aa). Substrate-binding positions include 70–77, 137–139, and 150–152; these read RGGQVTYH, SLG, and GLA. The active-site Acyl-thioester intermediate is Cys168.

This sequence belongs to the LipB family.

The protein resides in the cytoplasm. The enzyme catalyses octanoyl-[ACP] + L-lysyl-[protein] = N(6)-octanoyl-L-lysyl-[protein] + holo-[ACP] + H(+). Its pathway is protein modification; protein lipoylation via endogenous pathway; protein N(6)-(lipoyl)lysine from octanoyl-[acyl-carrier-protein]: step 1/2. Catalyzes the transfer of endogenously produced octanoic acid from octanoyl-acyl-carrier-protein onto the lipoyl domains of lipoate-dependent enzymes. Lipoyl-ACP can also act as a substrate although octanoyl-ACP is likely to be the physiological substrate. The protein is Octanoyltransferase of Vibrio cholerae serotype O1 (strain ATCC 39315 / El Tor Inaba N16961).